We begin with the raw amino-acid sequence, 326 residues long: Vitamin B12 import system permease protein BtuC (326 aa).

A run of 9 helical transmembrane segments spans residues 13 to 35 (IRWLLCLSVLMLLALLLSLCAGE), 55 to 77 (IRLPRTLAVLLVGAALAISGAVM), 90 to 107 (LLGVSNGAGVGLIAAVLL), 111 to 133 (QLPNWALGLCAIAGALIITLILL), 146 to 168 (LLAGVALGIICSALMTWAIYFST), 188 to 205 (WRQSWLMLALIPVLLWIC), 242 to 264 (MVGVSVALAGAIGFIGLVIPHIL), 274 to 296 (VLLPGCALAGASALLLADIVARL), and 303 to 322 (LPIGVVTATLGAPVFIWLLL).

It belongs to the binding-protein-dependent transport system permease family. FecCD subfamily. The complex is composed of two ATP-binding proteins (BtuD), two transmembrane proteins (BtuC) and a solute-binding protein (BtuF).

Its subcellular location is the cell inner membrane. In terms of biological role, part of the ABC transporter complex BtuCDF involved in vitamin B12 import. Involved in the translocation of the substrate across the membrane. This chain is Vitamin B12 import system permease protein BtuC, found in Shigella flexneri.